The sequence spans 382 residues: 3-dehydroquinate synthase (382 aa).

NAD(+) contacts are provided by residues 81 to 86, 115 to 119, 139 to 140, lysine 152, and lysine 161; these read EGEGSK, GVVGD, and TS. Zn(2+) is bound by residues glutamate 194, histidine 256, and histidine 274.

The protein belongs to the sugar phosphate cyclases superfamily. Dehydroquinate synthase family. Co(2+) serves as cofactor. Zn(2+) is required as a cofactor. The cofactor is NAD(+).

The protein localises to the cytoplasm. It carries out the reaction 7-phospho-2-dehydro-3-deoxy-D-arabino-heptonate = 3-dehydroquinate + phosphate. Its pathway is metabolic intermediate biosynthesis; chorismate biosynthesis; chorismate from D-erythrose 4-phosphate and phosphoenolpyruvate: step 2/7. Its function is as follows. Catalyzes the conversion of 3-deoxy-D-arabino-heptulosonate 7-phosphate (DAHP) to dehydroquinate (DHQ). The sequence is that of 3-dehydroquinate synthase from Bradyrhizobium sp. (strain BTAi1 / ATCC BAA-1182).